A 421-amino-acid chain; its full sequence is Gamma-glutamyl phosphate reductase (421 aa).

The protein belongs to the gamma-glutamyl phosphate reductase family.

It is found in the cytoplasm. It catalyses the reaction L-glutamate 5-semialdehyde + phosphate + NADP(+) = L-glutamyl 5-phosphate + NADPH + H(+). It functions in the pathway amino-acid biosynthesis; L-proline biosynthesis; L-glutamate 5-semialdehyde from L-glutamate: step 2/2. Its function is as follows. Catalyzes the NADPH-dependent reduction of L-glutamate 5-phosphate into L-glutamate 5-semialdehyde and phosphate. The product spontaneously undergoes cyclization to form 1-pyrroline-5-carboxylate. The sequence is that of Gamma-glutamyl phosphate reductase from Pseudomonas aeruginosa (strain UCBPP-PA14).